Here is a 769-residue protein sequence, read N- to C-terminus: Glutathione biosynthesis bifunctional protein GshAB (769 aa).

The glutamate--cysteine ligase stretch occupies residues 1–347 (MLDSFKEDPN…QLADENENNI (347 aa)). In terms of domain architecture, ATP-grasp spans 514 to 768 (KLVLAEHDIR…IGDKILDFLF (255 aa)). 541 to 599 (SLFEDKQIVVKPKSTNYGWGISIFKNKFTLEDYQEALNIAFSYDSSVIIEEFIPGDEFR) is an ATP binding site. Asp721, Glu738, and Asn740 together coordinate Mg(2+). Residues Asp721, Glu738, and Asn740 each contribute to the Mn(2+) site.

The protein in the N-terminal section; belongs to the glutamate--cysteine ligase type 1 family. Type 2 subfamily. Monomer. It depends on Mg(2+) as a cofactor. Mn(2+) is required as a cofactor.

It carries out the reaction L-cysteine + L-glutamate + ATP = gamma-L-glutamyl-L-cysteine + ADP + phosphate + H(+). The enzyme catalyses gamma-L-glutamyl-L-cysteine + glycine + ATP = glutathione + ADP + phosphate + H(+). The protein operates within sulfur metabolism; glutathione biosynthesis; glutathione from L-cysteine and L-glutamate: step 1/2. It participates in sulfur metabolism; glutathione biosynthesis; glutathione from L-cysteine and L-glutamate: step 2/2. In terms of biological role, synthesizes glutathione from L-glutamate and L-cysteine via gamma-L-glutamyl-L-cysteine. This chain is Glutathione biosynthesis bifunctional protein GshAB, found in Listeria monocytogenes serovar 1/2a (strain ATCC BAA-679 / EGD-e).